A 297-amino-acid chain; its full sequence is UDP-N-acetylenolpyruvoylglucosamine reductase (297 aa).

In terms of domain architecture, FAD-binding PCMH-type spans 22 to 195 (RVGGPAQYYA…LAGRFRLHRA (174 aa)). Residue Arg-169 is part of the active site. Ser-223 functions as the Proton donor in the catalytic mechanism. Residue Glu-293 is part of the active site.

This sequence belongs to the MurB family. It depends on FAD as a cofactor.

It localises to the cytoplasm. The enzyme catalyses UDP-N-acetyl-alpha-D-muramate + NADP(+) = UDP-N-acetyl-3-O-(1-carboxyvinyl)-alpha-D-glucosamine + NADPH + H(+). The protein operates within cell wall biogenesis; peptidoglycan biosynthesis. In terms of biological role, cell wall formation. This is UDP-N-acetylenolpyruvoylglucosamine reductase from Chloroflexus aggregans (strain MD-66 / DSM 9485).